Consider the following 355-residue polypeptide: Peptide chain release factor 1 (355 aa).

Position 232 is an N5-methylglutamine (Q232).

It belongs to the prokaryotic/mitochondrial release factor family. In terms of processing, methylated by PrmC. Methylation increases the termination efficiency of RF1.

The protein localises to the cytoplasm. Its function is as follows. Peptide chain release factor 1 directs the termination of translation in response to the peptide chain termination codons UAG and UAA. The chain is Peptide chain release factor 1 from Thermobifida fusca (strain YX).